The sequence spans 128 residues: Insoluble matrix shell protein 3 (128 aa).

A signal peptide spans 1 to 19; it reads MLMLLCIIATVIPFSLVEG.

In terms of tissue distribution, component of the acid-insoluble organic matrix of the calcified shell.

The protein localises to the secreted. This Ruditapes philippinarum (Japanese carpet shell) protein is Insoluble matrix shell protein 3.